A 461-amino-acid polypeptide reads, in one-letter code: Chromosomal replication initiator protein DnaA (461 aa).

A domain I, interacts with DnaA modulators region spans residues 1–84 (MAVSLWQQCI…RFDIGSRPSA (84 aa)). The tract at residues 84–124 (AKKFEPAPVATVRAPNTQTKATVGTYFNTQAEPIANANHRS) is domain II. The tract at residues 125-341 (NINPTYQFDN…GALNRVIANA (217 aa)) is domain III, AAA+ region. ATP is bound by residues Gly-169, Gly-171, Lys-172, and Thr-173. The interval 342–461 (NFTGRPITID…YANLIRTLSS (120 aa)) is domain IV, binds dsDNA.

This sequence belongs to the DnaA family. Oligomerizes as a right-handed, spiral filament on DNA at oriC.

It localises to the cytoplasm. Its function is as follows. Plays an essential role in the initiation and regulation of chromosomal replication. ATP-DnaA binds to the origin of replication (oriC) to initiate formation of the DNA replication initiation complex once per cell cycle. Binds the DnaA box (a 9 base pair repeat at the origin) and separates the double-stranded (ds)DNA. Forms a right-handed helical filament on oriC DNA; dsDNA binds to the exterior of the filament while single-stranded (ss)DNA is stabiized in the filament's interior. The ATP-DnaA-oriC complex binds and stabilizes one strand of the AT-rich DNA unwinding element (DUE), permitting loading of DNA polymerase. After initiation quickly degrades to an ADP-DnaA complex that is not apt for DNA replication. Binds acidic phospholipids. The chain is Chromosomal replication initiator protein DnaA from Shewanella putrefaciens (strain CN-32 / ATCC BAA-453).